The chain runs to 316 residues: Glutathione synthetase (316 aa).

Positions E124–E310 constitute an ATP-grasp domain. F150–G207 contributes to the ATP binding site. 2 residues coordinate Mg(2+): E281 and N283.

The protein belongs to the prokaryotic GSH synthase family. Mg(2+) is required as a cofactor. The cofactor is Mn(2+).

The catalysed reaction is gamma-L-glutamyl-L-cysteine + glycine + ATP = glutathione + ADP + phosphate + H(+). It participates in sulfur metabolism; glutathione biosynthesis; glutathione from L-cysteine and L-glutamate: step 2/2. The polypeptide is Glutathione synthetase (Vibrio parahaemolyticus serotype O3:K6 (strain RIMD 2210633)).